A 500-amino-acid polypeptide reads, in one-letter code: Cytochrome P450 71B37 (500 aa).

A helical transmembrane segment spans residues 2-22 (ATIWFLPLLFLSCLLLAALRL). Cysteine 440 is a binding site for heme.

The protein belongs to the cytochrome P450 family. Heme is required as a cofactor.

The protein resides in the membrane. This Arabidopsis thaliana (Mouse-ear cress) protein is Cytochrome P450 71B37 (CYP71B37).